The primary structure comprises 372 residues: F-box/kelch-repeat protein At2g44630 (372 aa).

The span at 1 to 13 shows a compositional bias: polar residues; it reads MSNADEPPQKTNQ. The interval 1–21 is disordered; that stretch reads MSNADEPPQKTNQPPSSSLTP. Positions 21-67 constitute an F-box domain; that stretch reads PPSLFSLPVDIVLNILALVPKRYYPILCCVSKSLRSLIRSPEIHKTR. Kelch repeat units lie at residues 136-181 and 183-228; these read EIYC…LVGG and IYVI…SVSL.

The chain is F-box/kelch-repeat protein At2g44630 from Arabidopsis thaliana (Mouse-ear cress).